The primary structure comprises 219 residues: Thiopurine S-methyltransferase (219 aa).

4 residues coordinate S-adenosyl-L-methionine: Trp-10, Leu-45, Glu-66, and Arg-123.

This sequence belongs to the class I-like SAM-binding methyltransferase superfamily. TPMT family.

It is found in the cytoplasm. It catalyses the reaction S-adenosyl-L-methionine + a thiopurine = S-adenosyl-L-homocysteine + a thiopurine S-methylether.. The chain is Thiopurine S-methyltransferase from Bordetella pertussis (strain Tohama I / ATCC BAA-589 / NCTC 13251).